Here is a 200-residue protein sequence, read N- to C-terminus: MCAARMAAAAQSVYSFSAHPLAGGEPVNLGSLRGKVLLIENVASLUGTTVRDYTQMNELQERLGPRALVVLGFPCNQFGHQENAKNEEILNSLKYVRPGGGFEPNFMLFQKCEVNGAKASPLFAFLREALPPPSDDPTALMTDPKFITWCPVCRNDVSWSFEKFLVGPDGVPVRRYSRRFPTIDIEPDIQALLSKGSGGA.

Serine 31 carries the phosphoserine modification. Residue selenocysteine 46 is part of the active site. A non-standard amino acid (selenocysteine) is located at residue selenocysteine 46. An N6-acetyllysine; alternate mark is found at lysine 85 and lysine 111. Lysine 85 and lysine 111 each carry N6-succinyllysine; alternate. Residue lysine 118 is modified to N6-acetyllysine. The residue at position 145 (lysine 145) is an N6-acetyllysine; alternate. Lysine 145 is subject to N6-succinyllysine; alternate. At serine 194 the chain carries Phosphoserine.

This sequence belongs to the glutathione peroxidase family. As to quaternary structure, homotetramer. Interacts with MIEN1. During periods of oxidative stress, Sec-46 may react with a superoxide radical, irreversibly lose hydroselenide and be converted to dehydroalanine.

It is found in the cytoplasm. The protein resides in the mitochondrion. The enzyme catalyses 2 glutathione + H2O2 = glutathione disulfide + 2 H2O. It catalyses the reaction a hydroperoxy polyunsaturated fatty acid + 2 glutathione = a hydroxy polyunsaturated fatty acid + glutathione disulfide + H2O. It carries out the reaction tert-butyl hydroperoxide + 2 glutathione = tert-butanol + glutathione disulfide + H2O. The catalysed reaction is cumene hydroperoxide + 2 glutathione = 2-phenylpropan-2-ol + glutathione disulfide + H2O. The enzyme catalyses (13S)-hydroperoxy-(9Z,11E)-octadecadienoate + 2 glutathione = (13S)-hydroxy-(9Z,11E)-octadecadienoate + glutathione disulfide + H2O. It catalyses the reaction (9S)-hydroperoxy-(10E,12Z)-octadecadienoate + 2 glutathione = (9S)-hydroxy-(10E,12Z)-octadecadienoate + glutathione disulfide + H2O. It carries out the reaction (5S)-hydroperoxy-(6E,8Z,11Z,14Z)-eicosatetraenoate + 2 glutathione = (5S)-hydroxy-(6E,8Z,11Z,14Z)-eicosatetraenoate + glutathione disulfide + H2O. The catalysed reaction is (12S)-hydroperoxy-(5Z,8Z,10E,14Z)-eicosatetraenoate + 2 glutathione = (12S)-hydroxy-(5Z,8Z,10E,14Z)-eicosatetraenoate + glutathione disulfide + H2O. The enzyme catalyses (12R)-hydroperoxy-(5Z,8Z,10E,14Z)-eicosatetraenoate + 2 glutathione = (12R)-hydroxy-(5Z,8Z,10E,14Z)-eicosatetraenoate + glutathione disulfide + H2O. It catalyses the reaction (15S)-hydroperoxy-(5Z,8Z,11Z,13E)-eicosatetraenoate + 2 glutathione = (15S)-hydroxy-(5Z,8Z,11Z,13E)-eicosatetraenoate + glutathione disulfide + H2O. It carries out the reaction (5S)-hydroperoxy-(6E,8Z,11Z,14Z,17Z)-eicosapentaenoate + 2 glutathione = (5S)-hydroxy-(6E,8Z,11Z,14Z,17Z)-eicosapentaenoate + glutathione disulfide + H2O. The catalysed reaction is (12S)-hydroperoxy-(5Z,8Z,10E,14Z,17Z)-eicosapentaenoate + 2 glutathione = (12S)-hydroxy-(5Z,8Z,10E,14Z,17Z)-eicosapentaenoate + glutathione disulfide + H2O. The enzyme catalyses (15S)-hydroperoxy-(5Z,8Z,11Z,13E,17Z)-eicosapentaenoate + 2 glutathione = (15S)-hydroxy-(5Z,8Z,11Z,13E,17Z)-eicosapentaenoate + glutathione disulfide + H2O. It catalyses the reaction (15S)-hydroperoxy-(11Z,13E)-eicosadienoate + 2 glutathione = (15S)-hydroxy-(11Z,13E)-eicosadienoate + glutathione disulfide + H2O. It carries out the reaction (17S)-hydroperoxy-(4Z,7Z,10Z,13Z,15E,19Z)-docosahexaenoate + 2 glutathione = (17S)-hydroxy-(4Z,7Z,10Z,13Z,15E,19Z)-docosahexaenoate + glutathione disulfide + H2O. In terms of biological role, catalyzes the reduction of hydroperoxides in a glutathione-dependent manner thus regulating cellular redox homeostasis. Can reduce small soluble hydroperoxides such as H2O2, cumene hydroperoxide and tert-butyl hydroperoxide, as well as several fatty acid-derived hydroperoxides. In platelets catalyzes the reduction of 12-hydroperoxyeicosatetraenoic acid, the primary product of the arachidonate 12-lipoxygenase pathway. The chain is Glutathione peroxidase 1 (GPX1) from Oryctolagus cuniculus (Rabbit).